A 557-amino-acid polypeptide reads, in one-letter code: MPERDSEPFSNPLAPDGHDVDDPHSFHQSKLTNEDFRKLLMTPRAAPTSAPPSKSRHHEMPREYNEDEDPAARRRKKKSYYAKLRQQEIERERELAEKYRDRAKERRDGVNKDYEETELISTTANYRAVGPTAEADKSAAEKRRQLIQESKFLGGDMEHTHLVKGLDFALLQKVRAEIASKEKEEEELMEKPQKETKKDEDPENKIEFKTRLGRNVYRMLFKSKAYERNELFLPGRMAYVVDLDDEYADTDIPTTLIRSKADCPTMEAQTTLTTNDIVISKLTQILSYLRQGTRNKKLKKKDKGKLEEKKPPEADMNIFEDIGDYVPSTTKTPRDKERERYRERERDRERDRDRDRERERERDRERERERDREREEEKKRHSYFEKPKVDDEPIDVDKGPGSAKELIKSINEKFAGSAGWEGTESLKKPEDKKQLGDFFGMSNSYAECYPATMDDMAVDSDEEVDYSKMDQGNKKGPLGRWDFDTQEEYSEYMNNKEALPKAAFQYGIKMSEGRKTRRFKETNDKAELDRQWKKISAIIEKRKKMEADGVEVKRPKY.

Residues 1–84 (MPERDSEPFS…RKKKSYYAKL (84 aa)) form a disordered region. Residues 16 to 25 (DGHDVDDPHS) show a composition bias toward basic and acidic residues. Low complexity predominate over residues 42–53 (TPRAAPTSAPPS). 2 positions are modified to N6-acetyllysine: K98 and K137. Residue K151 forms a Glycyl lysine isopeptide (Lys-Gly) (interchain with G-Cter in SUMO2) linkage. Positions 181–205 (KEKEEEELMEKPQKETKKDEDPENK) are disordered. S287 carries the phosphoserine modification. The span at 294 to 303 (RNKKLKKKDK) shows a compositional bias: basic residues. The disordered stretch occupies residues 294-402 (RNKKLKKKDK…PIDVDKGPGS (109 aa)). The segment covering 304 to 313 (GKLEEKKPPE) has biased composition (basic and acidic residues). Residues K310 and K331 each participate in a glycyl lysine isopeptide (Lys-Gly) (interchain with G-Cter in SUMO2) cross-link. The segment covering 332-398 (TPRDKERERY…VDDEPIDVDK (67 aa)) has biased composition (basic and acidic residues). 17 tandem repeats follow at residues 342–343 (RE), 344–345 (RE), 346–347 (RD), 348–349 (RE), 350–351 (RD), 352–353 (RD), 354–355 (RD), 356–357 (RE), 358–359 (RE), 360–361 (RE), 362–363 (RD), 364–365 (RE), 366–367 (RE), 368–369 (RE), 370–371 (RD), 372–373 (RE), and 374–375 (RE). A 17 X 2 AA tandem repeats of R-[ED] region spans residues 342–375 (RERERDRERDRDRDRERERERDRERERERDRERE). Residues K386, K388, K404, and K408 each participate in a glycyl lysine isopeptide (Lys-Gly) (interchain with G-Cter in SUMO2) cross-link. Phosphoserine occurs at positions 417 and 460. T485 carries the post-translational modification Phosphothreonine. Glycyl lysine isopeptide (Lys-Gly) (interchain with G-Cter in SUMO2) cross-links involve residues K496, K501, and K509. A Phosphoserine modification is found at S536. Residues K541, K543, K544, and K553 each participate in a glycyl lysine isopeptide (Lys-Gly) (interchain with G-Cter in SUMO2) cross-link.

The protein belongs to the RED family. As to quaternary structure, component of the spliceosome B complex. Interacts with SMU1. Interacts with MAD1L1. May interact with DHX15.

It is found in the nucleus. Its subcellular location is the nucleoplasm. The protein resides in the chromosome. It localises to the cytoplasm. The protein localises to the cytoskeleton. It is found in the spindle pole. In terms of biological role, involved in pre-mRNA splicing as a component of the spliceosome. Auxiliary spliceosomal protein that regulates selection of alternative splice sites in a small set of target pre-mRNA species. Required for normal mitotic cell cycle progression. Recruits MAD1L1 and MAD2L1 to kinetochores, and is required to trigger the spindle assembly checkpoint. Required for normal accumulation of SMU1. In Pongo abelii (Sumatran orangutan), this protein is Protein Red (IK).